A 436-amino-acid polypeptide reads, in one-letter code: Elongation factor 1-alpha (436 aa).

Positions 8–232 (KPHLNMIVTG…DDFKMAEKPV (225 aa)) constitute a tr-type G domain. Positions 17–24 (GHIDNGKS) are G1. GTP is bound at residue 17–24 (GHIDNGKS). Residue Ser24 participates in Mg(2+) binding. Residues 74–78 (GITID) are G2. The interval 95 to 98 (DAPG) is G3. Residues 95–99 (DAPGH) and 157–160 (NKMD) each bind GTP. The interval 157–160 (NKMD) is G4. A G5 region spans residues 196-198 (SGW).

The protein belongs to the TRAFAC class translation factor GTPase superfamily. Classic translation factor GTPase family. EF-Tu/EF-1A subfamily.

It is found in the cytoplasm. It carries out the reaction GTP + H2O = GDP + phosphate + H(+). In terms of biological role, GTP hydrolase that promotes the GTP-dependent binding of aminoacyl-tRNA to the A-site of ribosomes during protein biosynthesis. The protein is Elongation factor 1-alpha of Cenarchaeum symbiosum (strain A).